The chain runs to 81 residues: Short neurotoxin 1 (81 aa).

A signal peptide spans 1–21 (MKTLLLTLVVVTIVCLDLGYT). Disulfide bonds link cysteine 24-cysteine 43, cysteine 38-cysteine 60, cysteine 62-cysteine 73, and cysteine 74-cysteine 79.

It belongs to the three-finger toxin family. Short-chain subfamily. Type I alpha-neurotoxin sub-subfamily. As to expression, expressed by the venom gland.

It is found in the secreted. Functionally, binds to muscle nicotinic acetylcholine receptor (nAChR) and inhibit acetylcholine from binding to the receptor, thereby impairing neuromuscular transmission. In Hoplocephalus stephensii (Stephens's banded snake), this protein is Short neurotoxin 1.